The following is a 559-amino-acid chain: Hepatocyte nuclear factor 1-beta (559 aa).

The tract at residues 1-31 (MVSKLTSLQQELLSALLSSGVTKEVLVQALE) is dimerization. Positions 1–32 (MVSKLTSLQQELLSALLSSGVTKEVLVQALEE) constitute an HNF-p1 domain. Phosphoserine occurs at positions 49, 52, 75, and 80. The 96-residue stretch at 93–188 (KELQALNTEE…ILRQFNQTVQ (96 aa)) folds into the POU-specific atypical domain. A DNA-binding region (homeobox; HNF1-type) is located at residues 231-312 (MRRNRFKWGP…RRKEEEAFRQ (82 aa)). The span at 328–341 (NTLLSHSSPHHQPS) shows a compositional bias: low complexity. The interval 328–371 (NTLLSHSSPHHQPSTSPPNKLPGVRYNQQGNNEVTSSSTISHHG) is disordered. The segment covering 353-371 (YNQQGNNEVTSSSTISHHG) has biased composition (polar residues).

The protein belongs to the HNF1 homeobox family. As to quaternary structure, binds DNA as a dimer. Can form homodimer or heterodimer with HNF1-alpha. Interacts (via HNF-p1 domain) with PCBD1; the interaction increases its transactivation activity.

The protein resides in the nucleus. Functionally, transcription factor that binds to the inverted palindrome 5'-GTTAATNATTAAC-3'. Binds to the FPC element in the cAMP regulatory unit of the PLAU gene. Transcriptional activity is increased by coactivator PCBD1. This chain is Hepatocyte nuclear factor 1-beta (HNF1B), found in Sus scrofa (Pig).